Reading from the N-terminus, the 328-residue chain is Probable cell division protein WhiA (328 aa).

A DNA-binding region (H-T-H motif) is located at residues 275–308 (SLEELGQLHDPVLTKDAIAGRIRRLLAMADKRAE).

It belongs to the WhiA family.

Involved in cell division and chromosome segregation. The polypeptide is Probable cell division protein WhiA (Nocardioides sp. (strain ATCC BAA-499 / JS614)).